Consider the following 624-residue polypeptide: Probable potassium transport system protein Kup 1 (624 aa).

Helical transmembrane passes span 10-30, 48-68, 94-114, 133-153, 159-179, 210-230, 242-262, 270-290, 331-351, 363-383, 388-408, and 413-433; these read LALGALGIVFGDIGTSPLYAL, LSLIFWSLIIVVSFKYLMIIF, PVFYIVAIFGAGLLLGDGMLT, LYPYVLPIASLILVLLFSLQA, IGYLFGPLILIWFITIAILGI, FLLGGIFLVVTGGEALFADIG, FFIALPCLLLNYFGQGANLIV, PFFMIAPPWFYLPLIIIATVA, IYVPQINFILFIGTMAFCLAF, IAVNLEMLLVDAMVAYAAVSI, TFNVIFLFGLFLLIDLAFLGA, and FITGGWVPIVLAFFIAFIMYS.

The protein belongs to the HAK/KUP transporter (TC 2.A.72) family.

The protein localises to the cell inner membrane. The catalysed reaction is K(+)(in) + H(+)(in) = K(+)(out) + H(+)(out). In terms of biological role, transport of potassium into the cell. Likely operates as a K(+):H(+) symporter. This Legionella pneumophila (strain Paris) protein is Probable potassium transport system protein Kup 1.